The sequence spans 101 residues: DNA-directed RNA polymerase subunit omega (101 aa).

Residues Met-1 to Ser-13 show a composition bias toward low complexity. The interval Met-1–Thr-22 is disordered.

This sequence belongs to the RNA polymerase subunit omega family. As to quaternary structure, the RNAP catalytic core consists of 2 alpha, 1 beta, 1 beta' and 1 omega subunit. When a sigma factor is associated with the core the holoenzyme is formed, which can initiate transcription.

It carries out the reaction RNA(n) + a ribonucleoside 5'-triphosphate = RNA(n+1) + diphosphate. Functionally, promotes RNA polymerase assembly. Latches the N- and C-terminal regions of the beta' subunit thereby facilitating its interaction with the beta and alpha subunits. This chain is DNA-directed RNA polymerase subunit omega, found in Rhodococcus jostii (strain RHA1).